We begin with the raw amino-acid sequence, 380 residues long: N-acetylneuraminate epimerase (380 aa).

The signal sequence occupies residues 1–21; that stretch reads MKFTKTALFTVLAATAFAAQA. 7 Kelch repeats span residues 42-86, 88-140, 142-176, 177-222, 225-274, 296-349, and 351-380; these read TVYV…AGVN, KLYV…AADG, KIYF…AIFD, PYFN…AIKD, LLVV…IAGG, ANYE…SYNN, and VLLI…LTVE. Glutamate 231 functions as the Proton acceptor in the catalytic mechanism.

Belongs to the NanM family. In terms of assembly, homodimer.

The protein localises to the periplasm. The enzyme catalyses N-acetyl-alpha-neuraminate = N-acetyl-beta-neuraminate. Functionally, converts alpha-N-acetylneuranimic acid (Neu5Ac) to the beta-anomer, accelerating the equilibrium between the alpha- and beta-anomers. Probably facilitates sialidase-negative bacteria to compete successfully for limited amounts of extracellular Neu5Ac, which is likely taken up in the beta-anomer. In addition, the rapid removal of sialic acid from solution might be advantageous to the bacterium to damp down host responses. The sequence is that of N-acetylneuraminate epimerase from Pasteurella multocida (strain Pm70).